Consider the following 264-residue polypeptide: Thymidylate synthase (264 aa).

Residue arginine 21 participates in dUMP binding. Histidine 51 is a (6R)-5,10-methylene-5,6,7,8-tetrahydrofolate binding site. Residue arginine 126–arginine 127 coordinates dUMP. The Nucleophile role is filled by cysteine 146. DUMP is bound by residues arginine 166–aspartate 169, asparagine 177, and histidine 207–tyrosine 209. Residue aspartate 169 coordinates (6R)-5,10-methylene-5,6,7,8-tetrahydrofolate. Alanine 263 is a binding site for (6R)-5,10-methylene-5,6,7,8-tetrahydrofolate.

The protein belongs to the thymidylate synthase family. Bacterial-type ThyA subfamily. Homodimer.

It localises to the cytoplasm. The catalysed reaction is dUMP + (6R)-5,10-methylene-5,6,7,8-tetrahydrofolate = 7,8-dihydrofolate + dTMP. The protein operates within pyrimidine metabolism; dTTP biosynthesis. In terms of biological role, catalyzes the reductive methylation of 2'-deoxyuridine-5'-monophosphate (dUMP) to 2'-deoxythymidine-5'-monophosphate (dTMP) while utilizing 5,10-methylenetetrahydrofolate (mTHF) as the methyl donor and reductant in the reaction, yielding dihydrofolate (DHF) as a by-product. This enzymatic reaction provides an intracellular de novo source of dTMP, an essential precursor for DNA biosynthesis. This is Thymidylate synthase from Xanthomonas oryzae pv. oryzae (strain MAFF 311018).